The chain runs to 530 residues: Bifunctional NAD(P)H-hydrate repair enzyme Nnr (530 aa).

The tract at residues 1-224 (MYLVTAAEMG…GIPQKLVATQ (224 aa)) is NAD(P)H-hydrate epimerase. The region spanning 9 to 222 (MGQLDRLASS…DIGIPQKLVA (214 aa)) is the YjeF N-terminal domain. An NADPHX 1; for epimerase activity region spans residues 60 to 64 (NNGGD). Residues Asn-61 and Asp-132 each coordinate K(+). The segment at 136-142 (GTGFKGA) is NADPHX 1; for epimerase activity. Residue Asp-165 participates in (6S)-NADPHX binding. Ser-168 contributes to the K(+) binding site. One can recognise a YjeF C-terminal domain in the interval 232 to 515 (TAAWCRSQLP…DFLPYVLRNL (284 aa)). The ADP-dependent (S)-NAD(P)H-hydrate dehydratase stretch occupies residues 232-530 (TAAWCRSQLP…TIVAAGLGRD (299 aa)). Gly-338 serves as a coordination point for (6S)-NADPHX. The tract at residues 389-395 (HPGEMAR) is NADPHX 2; for dehydratase activity. ADP is bound by residues 426-430 (KGART) and 446-455 (NPGMATAGSG). Asp-456 contacts (6S)-NADPHX.

This sequence in the N-terminal section; belongs to the NnrE/AIBP family. It in the C-terminal section; belongs to the NnrD/CARKD family. K(+) serves as cofactor.

The enzyme catalyses (6S)-NADHX + ADP = AMP + phosphate + NADH + H(+). It carries out the reaction (6S)-NADPHX + ADP = AMP + phosphate + NADPH + H(+). The catalysed reaction is (6R)-NADHX = (6S)-NADHX. It catalyses the reaction (6R)-NADPHX = (6S)-NADPHX. Functionally, bifunctional enzyme that catalyzes the epimerization of the S- and R-forms of NAD(P)HX and the dehydration of the S-form of NAD(P)HX at the expense of ADP, which is converted to AMP. This allows the repair of both epimers of NAD(P)HX, a damaged form of NAD(P)H that is a result of enzymatic or heat-dependent hydration. This chain is Bifunctional NAD(P)H-hydrate repair enzyme Nnr (nnr), found in Moorella thermoacetica (strain ATCC 39073 / JCM 9320).